The sequence spans 368 residues: Cytoskeleton protein RodZ (368 aa).

Over 1–111 (MNTEASQDQT…LGKKHKKRDG (111 aa)) the chain is Cytoplasmic. Residues 19–79 (LRQARESLGL…KLVHLPEDEL (61 aa)) enclose the HTH cro/C1-type domain. The segment at residues 30 to 49 (QQTVAERLCLKVSTIRDIEE) is a DNA-binding region (H-T-H motif). Residues 112–132 (WLMSFTWLIVLVVLGLTGAWW) form a helical; Signal-anchor for type II membrane protein membrane-spanning segment. Residues 133-368 (WQNHQAQQAE…RVARLTVGVE (236 aa)) are Periplasmic-facing. Residues 151 to 243 (SAQLSQNGGQ…STEPVDTANT (93 aa)) are disordered. A compositionally biased stretch (low complexity) spans 193–221 (STSAVTNSATTSSATTSSVPTTSSVPKTT). Polar residues predominate over residues 229 to 243 (VPKTNSTEPVDTANT).

The protein belongs to the RodZ family.

The protein localises to the cell inner membrane. Cytoskeletal protein that is involved in cell-shape control through regulation of the length of the long axis. This is Cytoskeleton protein RodZ from Yersinia pseudotuberculosis serotype O:3 (strain YPIII).